The chain runs to 394 residues: NAC domain-containing protein 26 (394 aa).

In terms of domain architecture, NAC spans 7 to 156; that stretch reads VPPGFRFHPT…GWVVCRVFKK (150 aa). A DNA-binding region spans residues 107–162; that stretch reads IGMRKTLVFYKGRAPNGQKSDWIMHEYRLETSENGTPQEEGWVVCRVFKKKLAATV.

The protein belongs to the plant vascular related NAC-domain protein family. In terms of assembly, interacts with NAC083/VNI2. Detected in root vessels of protoxylems, outermost metaxylems, inner metaxylems, shoots and hypocotyls. Expressed in roots, hypocotyls, cotyledons and leaves. Expressed in developing xylems. Specifically expressed in vessels in the secondary xylem of the root-hypocotyl region, and in vessels but not in interfascicular fibers in stems.

The protein localises to the nucleus. Functionally, transcription activator that binds to the secondary wall NAC binding element (SNBE), 5'-(T/A)NN(C/T)(T/C/G)TNNNNNNNA(A/C)GN(A/C/T)(A/T)-3', in the promoter of target genes. Involved in xylem formation by promoting the expression of secondary wall-associated transcription factors and of genes involved in secondary wall biosynthesis and programmed cell death, genes driven by the secondary wall NAC binding element (SNBE). Triggers thickening of secondary walls. The chain is NAC domain-containing protein 26 from Arabidopsis thaliana (Mouse-ear cress).